Here is a 157-residue protein sequence, read N- to C-terminus: SsrA-binding protein (157 aa).

A disordered region spans residues 133 to 157; sequence LHDKRETEKKRDWSREKSRLLRARG. A compositionally biased stretch (basic and acidic residues) spans 135-151; that stretch reads DKRETEKKRDWSREKSR.

It belongs to the SmpB family.

It localises to the cytoplasm. In terms of biological role, required for rescue of stalled ribosomes mediated by trans-translation. Binds to transfer-messenger RNA (tmRNA), required for stable association of tmRNA with ribosomes. tmRNA and SmpB together mimic tRNA shape, replacing the anticodon stem-loop with SmpB. tmRNA is encoded by the ssrA gene; the 2 termini fold to resemble tRNA(Ala) and it encodes a 'tag peptide', a short internal open reading frame. During trans-translation Ala-aminoacylated tmRNA acts like a tRNA, entering the A-site of stalled ribosomes, displacing the stalled mRNA. The ribosome then switches to translate the ORF on the tmRNA; the nascent peptide is terminated with the 'tag peptide' encoded by the tmRNA and targeted for degradation. The ribosome is freed to recommence translation, which seems to be the essential function of trans-translation. The sequence is that of SsrA-binding protein from Afipia carboxidovorans (strain ATCC 49405 / DSM 1227 / KCTC 32145 / OM5) (Oligotropha carboxidovorans).